We begin with the raw amino-acid sequence, 280 residues long: Dimethylglycine N-methyltransferase (280 aa).

Belongs to the methyltransferase superfamily. Monomer.

It catalyses the reaction N,N-dimethylglycine + S-adenosyl-L-methionine = glycine betaine + S-adenosyl-L-homocysteine + H(+). The protein operates within amine and polyamine biosynthesis; betaine biosynthesis via glycine pathway; betaine from glycine: step 3/3. Its function is as follows. Catalyzes the methylation of dimethylglycine to betaine with S-adenosylmethionine (AdoMet) acting as the methyl donor. It has strict specificity for dimethylglycine as the methyl group acceptors. The sequence is that of Dimethylglycine N-methyltransferase from Parasynechococcus marenigrum (strain WH8102).